A 203-amino-acid polypeptide reads, in one-letter code: Guanylate kinase (203 aa).

One can recognise a Guanylate kinase-like domain in the interval 3 to 181; sequence GTLYIVAAPS…AVSEMCAIFT (179 aa). 10–17 contacts ATP; it reads APSGAGKS.

Belongs to the guanylate kinase family.

The protein localises to the cytoplasm. The enzyme catalyses GMP + ATP = GDP + ADP. Essential for recycling GMP and indirectly, cGMP. The sequence is that of Guanylate kinase from Xanthomonas campestris pv. campestris (strain 8004).